Here is a 309-residue protein sequence, read N- to C-terminus: Dicarboxylate carrier UCP2 (309 aa).

The Mitochondrial intermembrane portion of the chain corresponds to 1 to 16 (MVGFKATDVPPTATVK). Solcar repeat units lie at residues 11–106 (PTAT…VKQF), 114–203 (AGIG…IKDT), and 212–297 (DDLP…LKRA). The segment at 16–63 (KFLGAGTAACIADLITFPLDTAKVRLQIQGERQGPMQAAASAQYRGVL) is important for interaction with long-chain fatty acids. The chain crosses the membrane as a helical span at residues 17–40 (FLGAGTAACIADLITFPLDTAKVR). Residues 41-77 (LQIQGERQGPMQAAASAQYRGVLGTILTMVRTEGPRS) are Mitochondrial matrix-facing. The chain crosses the membrane as a helical span at residues 78–103 (LYSGLVAGLQRQMSFASVRIGLYDSV). The Mitochondrial intermembrane segment spans residues 104 to 119 (KQFYTKGSEHAGIGSR). A helical membrane pass occupies residues 120–145 (LLAGSTTGALAVAVAQPTDVVKVRFQ). The Mitochondrial matrix segment spans residues 146-173 (AQARAGAGRRYQSTVEAYKTIAREEGFR). A helical transmembrane segment spans residues 174-199 (GLWKGTSPNVARNAIVNCAELVTYDL). At 200–217 (IKDTLLKAHLMTDDLPCH) the chain is on the mitochondrial intermembrane side. The chain crosses the membrane as a helical span at residues 218–242 (FTSAFGAGFCTTVIASPVDVVKTRY). The Mitochondrial matrix segment spans residues 243-268 (MNSALGQYSSAGHCALTMLQKEGPQA). A helical transmembrane segment spans residues 269-294 (FYKGFMPSFLRLGSWNVVMFVTYEQL). The important for interaction with long-chain fatty acids stretch occupies residues 278–285 (LRLGSWNV). Residues 295–309 (KRALMAARASREAPF) are Mitochondrial intermembrane-facing.

Belongs to the mitochondrial carrier (TC 2.A.29) family. In terms of assembly, homotetramer. Adopts an asymmetrical dimer of dimers functional form. Interacts with MICU1 (when methylated); leading to decrease the calcium sensitivity of MICU1.

The protein localises to the mitochondrion inner membrane. The catalysed reaction is L-aspartate(out) + phosphate(in) + H(+)(in) = L-aspartate(in) + phosphate(out) + H(+)(out). It catalyses the reaction oxaloacetate(out) + phosphate(in) + H(+)(in) = oxaloacetate(in) + phosphate(out) + H(+)(out). The enzyme catalyses (S)-malate(out) + phosphate(in) + H(+)(in) = (S)-malate(in) + phosphate(out) + H(+)(out). It carries out the reaction malonate(out) + phosphate(in) + H(+)(in) = malonate(in) + phosphate(out) + H(+)(out). The catalysed reaction is sulfate(out) + phosphate(in) + H(+)(in) = sulfate(in) + phosphate(out) + H(+)(out). It catalyses the reaction (S)-malate(out) = (S)-malate(in). The enzyme catalyses L-aspartate(out) = L-aspartate(in). It carries out the reaction phosphate(in) = phosphate(out). The catalysed reaction is chloride(in) = chloride(out). It catalyses the reaction H(+)(in) = H(+)(out). The enzyme catalyses a long-chain fatty acid(out) = a long-chain fatty acid(in). Antiporter that exports dicarboxylate intermediates of the Krebs cycle in exchange for phosphate plus a proton across the inner membrane of mitochondria, a process driven by mitochondrial motive force with an overall impact on glycolysis, glutaminolysis and glutathione-dependent redox balance. Continuous export of oxaloacetate and related four-carbon dicarboxylates from mitochondrial matrix into the cytosol negatively regulates the oxidation of acetyl-CoA substrates via the Krebs cycle lowering the ATP/ADP ratio and reactive oxygen species (ROS) production. May mediate inducible proton entry into the mitochondrial matrix affecting ATP turnover as a protection mechanism against oxidative stress. The proton currents are most likely associated with fatty acid flipping across the inner membrane of mitochondria in a metabolic process regulated by free fatty acids and purine nucleotides. Regulates the use of glucose as a source of energy. Required for glucose-induced DRP1-dependent mitochondrial fission and neuron activation in the ventromedial nucleus of the hypothalamus (VMH). This mitochondrial adaptation mechanism modulates the VMH pool of glucose-excited neurons with an impact on systemic glucose homeostasis. Regulates ROS levels and metabolic reprogramming of macrophages during the resolution phase of inflammation. Attenuates ROS production in response to IL33 to preserve the integrity of the Krebs cycle required for persistent production of itaconate and subsequent GATA3-dependent differentiation of inflammation-resolving alternatively activated macrophages. Can unidirectionally transport anions including L-malate, L-aspartate, phosphate and chloride ions. Does not mediate adaptive thermogenesis. In Bos taurus (Bovine), this protein is Dicarboxylate carrier UCP2 (UCP2).